Consider the following 548-residue polypeptide: Membrane protein insertase YidC (548 aa).

A helical membrane pass occupies residues 6–26 (NLLVIALLFVSFMIWQAWEQD). The tract at residues 28–56 (NPQPQTQQTTQTTTTAAGSAADQGVPASG) is disordered. Residues 29–42 (PQPQTQQTTQTTTT) are compositionally biased toward low complexity. 4 helical membrane passes run 350 to 370 (FVGNWGFSIIIITFIVRGIMY), 424 to 444 (FPLIIQMPIFLALYYMLMGSI), 458 to 478 (LSAQDPYYILPILMGVTMFFI), and 499 to 519 (PVIFTVFFLWFPSGLVLYYIV).

This sequence belongs to the OXA1/ALB3/YidC family. Type 1 subfamily. Interacts with the Sec translocase complex via SecD. Specifically interacts with transmembrane segments of nascent integral membrane proteins during membrane integration.

The protein localises to the cell inner membrane. In terms of biological role, required for the insertion and/or proper folding and/or complex formation of integral membrane proteins into the membrane. Involved in integration of membrane proteins that insert both dependently and independently of the Sec translocase complex, as well as at least some lipoproteins. Aids folding of multispanning membrane proteins. The protein is Membrane protein insertase YidC of Salmonella paratyphi C (strain RKS4594).